A 205-amino-acid chain; its full sequence is Large ribosomal subunit protein uL3 (205 aa).

This sequence belongs to the universal ribosomal protein uL3 family. Part of the 50S ribosomal subunit. Forms a cluster with proteins L14 and L19.

Functionally, one of the primary rRNA binding proteins, it binds directly near the 3'-end of the 23S rRNA, where it nucleates assembly of the 50S subunit. The sequence is that of Large ribosomal subunit protein uL3 from Flavobacterium johnsoniae (strain ATCC 17061 / DSM 2064 / JCM 8514 / BCRC 14874 / CCUG 350202 / NBRC 14942 / NCIMB 11054 / UW101) (Cytophaga johnsonae).